A 976-amino-acid polypeptide reads, in one-letter code: Dolichyl-phosphooligosaccharide-protein glycotransferase 1 (976 aa).

Over Met-1–Thr-21 the chain is Cytoplasmic. The helical transmembrane segment at Tyr-22–Phe-42 threads the bilayer. The Extracellular portion of the chain corresponds to Tyr-43–Glu-112. The DXD motif 1 signature appears at Asp-55–Asp-57. Asp-57 lines the Mn(2+) pocket. Residues Leu-113–Leu-133 traverse the membrane as a helical segment. The Cytoplasmic segment spans residues Leu-134 to Gly-135. The chain crosses the membrane as a helical span at residues Arg-136–Ala-156. Residues Asn-157–Asn-165 lie on the Extracellular side of the membrane. A helical membrane pass occupies residues Ala-166–Tyr-186. 2 residues coordinate Mn(2+): Arg-167 and Asp-169. The DXD motif 2 motif lies at Arg-167 to Asp-169. The Cytoplasmic segment spans residues Leu-187–Thr-193. Residues Arg-194–Asn-214 form a helical membrane-spanning segment. A topological domain (extracellular) is located at residue Gly-215. A helical membrane pass occupies residues Ser-216 to Ile-236. Residues Phe-237–Val-247 are Cytoplasmic-facing. Residues Lys-248–Gly-268 traverse the membrane as a helical segment. Position 269 (Ile-269) is a topological domain, extracellular. A helical transmembrane segment spans residues Val-270 to Leu-290. The Cytoplasmic portion of the chain corresponds to Val-291 to Lys-306. The chain crosses the membrane as a helical span at residues His-307 to Val-327. Residues Gly-328–Lys-360 lie on the Extracellular side of the membrane. Positions Thr-347 to Glu-350 match the TIXE motif motif. The chain crosses the membrane as a helical span at residues Ala-361–Leu-381. Over Ile-382 to Lys-396 the chain is Cytoplasmic. The helical transmembrane segment at Ser-397–Leu-417 threads the bilayer. Residue Ala-418 is a topological domain, extracellular. Residues Val-419–Phe-439 form a helical membrane-spanning segment. Arg-420 is an a glycophospholipid binding site. Topologically, residues Ser-440 to Ile-453 are cytoplasmic. The chain crosses the membrane as a helical span at residues Lys-454–Pro-474. Residues Val-475–Glu-976 lie on the Extracellular side of the membrane. An interacts with target acceptor peptide in protein substrate region spans residues Trp-513–Asp-515. A WWDYG motif motif is present at residues Trp-513–Gly-517. Tyr-518 contributes to the a glycophospholipid binding site. Positions Asp-573–Ile-580 match the DK motif motif.

It belongs to the STT3 family. It depends on Mn(2+) as a cofactor. Mg(2+) serves as cofactor.

It is found in the cell membrane. It catalyses the reaction an archaeal dolichyl phosphooligosaccharide + [protein]-L-asparagine = an archaeal dolichyl phosphate + a glycoprotein with the oligosaccharide chain attached by N-beta-D-glycosyl linkage to a protein L-asparagine.. Its pathway is protein modification; protein glycosylation. Functionally, oligosaccharyl transferase (OST) that catalyzes the initial transfer of a defined glycan (ManNAcXyl(2)GlcAMan(2)GalNAc in Pyrococcus) from the lipid carrier dolichol-monophosphate to an asparagine residue within an Asn-X-Ser/Thr consensus motif in nascent polypeptide chains, the first step in protein N-glycosylation. The sequence is that of Dolichyl-phosphooligosaccharide-protein glycotransferase 1 (aglB1) from Pyrococcus horikoshii (strain ATCC 700860 / DSM 12428 / JCM 9974 / NBRC 100139 / OT-3).